Reading from the N-terminus, the 274-residue chain is Bis(5'-nucleosyl)-tetraphosphatase, symmetrical (274 aa).

Belongs to the Ap4A hydrolase family.

It carries out the reaction P(1),P(4)-bis(5'-adenosyl) tetraphosphate + H2O = 2 ADP + 2 H(+). Hydrolyzes diadenosine 5',5'''-P1,P4-tetraphosphate to yield ADP. This Shewanella sp. (strain MR-7) protein is Bis(5'-nucleosyl)-tetraphosphatase, symmetrical.